The primary structure comprises 387 residues: 1,3-propanediol dehydrogenase (387 aa).

It belongs to the iron-containing alcohol dehydrogenase family. In terms of assembly, homooctamer. Requires Fe cation as cofactor.

It carries out the reaction propane-1,3-diol + NAD(+) = 3-hydroxypropanal + NADH + H(+). The protein is 1,3-propanediol dehydrogenase (dhaT) of Klebsiella pneumoniae.